The primary structure comprises 294 residues: Nucleotide-binding protein Maqu_2718 (294 aa).

ATP is bound at residue 8–15 (GRSGSGKS). 61-64 (DARN) is a binding site for GTP.

Belongs to the RapZ-like family.

In terms of biological role, displays ATPase and GTPase activities. The protein is Nucleotide-binding protein Maqu_2718 of Marinobacter nauticus (strain ATCC 700491 / DSM 11845 / VT8) (Marinobacter aquaeolei).